The chain runs to 325 residues: DDB1- and CUL4-associated factor 7 homolog (325 aa).

WD repeat units lie at residues glutamate 62 to lysine 104, glutamate 115 to glutamine 155, alanine 158 to isoleucine 197, and phenylalanine 247 to glutamate 287.

It belongs to the WD repeat DCAF7 family.

The sequence is that of DDB1- and CUL4-associated factor 7 homolog (wdr68) from Dictyostelium discoideum (Social amoeba).